The chain runs to 374 residues: N5-carboxyaminoimidazole ribonucleotide synthase (374 aa).

Residues Arg-108, Lys-148, 153-159 (GYDGKGQ), 183-186 (EKYL), Glu-191, His-214, and 266-267 (NE) contribute to the ATP site. In terms of domain architecture, ATP-grasp spans 112–296 (KETLKSAGTK…QFDTHILAVT (185 aa)).

The protein belongs to the PurK/PurT family. As to quaternary structure, homodimer.

It carries out the reaction 5-amino-1-(5-phospho-beta-D-ribosyl)imidazole + hydrogencarbonate + ATP = 5-carboxyamino-1-(5-phospho-D-ribosyl)imidazole + ADP + phosphate + 2 H(+). It participates in purine metabolism; IMP biosynthesis via de novo pathway; 5-amino-1-(5-phospho-D-ribosyl)imidazole-4-carboxylate from 5-amino-1-(5-phospho-D-ribosyl)imidazole (N5-CAIR route): step 1/2. Its function is as follows. Catalyzes the ATP-dependent conversion of 5-aminoimidazole ribonucleotide (AIR) and HCO(3)(-) to N5-carboxyaminoimidazole ribonucleotide (N5-CAIR). The protein is N5-carboxyaminoimidazole ribonucleotide synthase of Staphylococcus aureus (strain MSSA476).